Reading from the N-terminus, the 425-residue chain is tRNA(Ile)-lysidine synthase (425 aa).

Ser27 to Ser32 is an ATP binding site.

Belongs to the tRNA(Ile)-lysidine synthase family.

It localises to the cytoplasm. It carries out the reaction cytidine(34) in tRNA(Ile2) + L-lysine + ATP = lysidine(34) in tRNA(Ile2) + AMP + diphosphate + H(+). Functionally, ligates lysine onto the cytidine present at position 34 of the AUA codon-specific tRNA(Ile) that contains the anticodon CAU, in an ATP-dependent manner. Cytidine is converted to lysidine, thus changing the amino acid specificity of the tRNA from methionine to isoleucine. The sequence is that of tRNA(Ile)-lysidine synthase from Streptococcus pneumoniae (strain Hungary19A-6).